A 736-amino-acid chain; its full sequence is 3',5'-cyclic-AMP phosphodiesterase 4B (736 aa).

2 disordered regions span residues 51 to 77 and 96 to 116; these read QLPP…PTTL and DVEN…SSSS. Ser56 carries the phosphoserine modification. Position 290 is a phosphoserine (Ser290). The 330-residue stretch at 330–659 folds into the PDEase domain; it reads VNTENEDHLA…NWYQSMIPQS (330 aa). His406 (proton donor) is an active-site residue. Position 406 (His406) interacts with 3',5'-cyclic AMP. AMP-binding residues include His406 and His410. Zn(2+)-binding residues include His410, His446, Asp447, and Asp564. AMP is bound by residues Asp447, Asp564, Gln615, and Phe618. Asp447 provides a ligand contact to Mg(2+). A Mn(2+)-binding site is contributed by Asp447. 3',5'-cyclic AMP is bound by residues Gln615 and Phe618. Phosphoserine is present on residues Ser659 and Ser661. The segment at 685-736 is disordered; the sequence is EEEDSEGPEKEGEGPNYFSSTKTLCVIDPENRDSLEETDIDIATEDKSLIDT.

This sequence belongs to the cyclic nucleotide phosphodiesterase family. PDE4 subfamily. As to quaternary structure, interacts with DISC1. Requires Zn(2+) as cofactor. The cofactor is Mg(2+). Mn(2+) serves as cofactor. Widely expressed. As to expression, expressed in brain, heart, lung and liver. In terms of tissue distribution, expressed in liver and brain.

It is found in the cytoplasm. The protein localises to the cell membrane. It catalyses the reaction 3',5'-cyclic AMP + H2O = AMP + H(+). It functions in the pathway purine metabolism; 3',5'-cyclic AMP degradation; AMP from 3',5'-cyclic AMP: step 1/1. With respect to regulation, inhibited by rolipram. Hydrolyzes the second messenger cAMP, which is a key regulator of many important physiological processes. This Rattus norvegicus (Rat) protein is 3',5'-cyclic-AMP phosphodiesterase 4B.